The sequence spans 202 residues: Glycerol-3-phosphate acyltransferase (202 aa).

Helical transmembrane passes span 3-23 (NLII…LILA), 87-107 (LLWS…YLLF), 118-138 (GAMI…WVVI), 144-164 (ISSL…FIFN), and 167-187 (LEIH…YKHL).

The protein belongs to the PlsY family. Probably interacts with PlsX.

It localises to the cell inner membrane. It carries out the reaction an acyl phosphate + sn-glycerol 3-phosphate = a 1-acyl-sn-glycero-3-phosphate + phosphate. It participates in lipid metabolism; phospholipid metabolism. Catalyzes the transfer of an acyl group from acyl-phosphate (acyl-PO(4)) to glycerol-3-phosphate (G3P) to form lysophosphatidic acid (LPA). This enzyme utilizes acyl-phosphate as fatty acyl donor, but not acyl-CoA or acyl-ACP. This Campylobacter jejuni (strain RM1221) protein is Glycerol-3-phosphate acyltransferase.